The chain runs to 142 residues: Large ribosomal subunit protein uL11 (142 aa).

Belongs to the universal ribosomal protein uL11 family. In terms of assembly, part of the ribosomal stalk of the 50S ribosomal subunit. Interacts with L10 and the large rRNA to form the base of the stalk. L10 forms an elongated spine to which L12 dimers bind in a sequential fashion forming a multimeric L10(L12)X complex. Post-translationally, one or more lysine residues are methylated.

Its function is as follows. Forms part of the ribosomal stalk which helps the ribosome interact with GTP-bound translation factors. This chain is Large ribosomal subunit protein uL11, found in Actinobacillus succinogenes (strain ATCC 55618 / DSM 22257 / CCUG 43843 / 130Z).